The following is a 734-amino-acid chain: MPRAPTSAIKKQPLTFAQLAAYDDILTDALIDHVYYWTAIPKNRPLYHPSRGIREEEITKIIQTHLIVDPDLAIAEEKLLATDGLRKFHNSLRTDKEKEDFKAHLRRYISIYLPDCPFEVNATNRFTIDSYEASITARRPIRRNEAIKYLAGTQVTVTPEEEAQLALRKKDFSLVVSSRSKLTSLFMGPARFANHDCAANARLVTRGSAGIEIFACRDIGLGEEITVTYSESYFGENNCDCLCQTCEDNVANGWKPKDGTVPVHRSIEESVLGDDQGYSLRRRRRERSVSVAGSRTSSVTPDIRPRIFKTAKNRAMASDRASTTDSDGIDVVAMAVAAPKRNFDTTALSSPPLTPAKRQKPNHYDVVPLPLGLDVSRDSSASGPVDSLIATEDEKSTATQATTPEFEEPKPPSMREKPLLSPEMSPMKEGATPVGALNGERDEPTETGAPLSVLPTTETDLPEETLDIAATTPSLFPSSECSMTANDLPEHITPVSEPPRLTQEGKSVARQDSQETIIEESLAVPNSAPSQIQEAENNAQQGAETPVLGASSLTAEPHNEVAPVISAVSTKKKKRRVSEKPAPEPVRKQRVPGDYTLTPLLLAQPETAWIHCTNCNTAFVQSDAYYTRANCSRCERHSKLYGYVWPKTAPAGKNDREERVLDHRLINRFLHPDDEAIIRGRKPWRERLGQSSSSLAPSEERGRQRESGTPQGTPGDNYRRSGRARRASAKAMAQ.

Positions 116–230 constitute an SET domain; it reads CPFEVNATNR…LGEEITVTYS (115 aa). Disordered stretches follow at residues 343–459, 523–543, 567–591, and 681–734; these read FDTT…TTET, AVPN…QQGA, AVST…KQRV, and RKPW…AMAQ. The span at 407–418 shows a compositional bias: basic and acidic residues; sequence EEPKPPSMREKP. Residues 527 to 543 show a composition bias toward polar residues; it reads SAPSQIQEAENNAQQGA. Residues 578 to 587 are compositionally biased toward basic and acidic residues; the sequence is SEKPAPEPVR.

Belongs to the class V-like SAM-binding methyltransferase superfamily. Histone-lysine methyltransferase family. Suvar4-20 subfamily.

The protein localises to the nucleus. Its subcellular location is the chromosome. The catalysed reaction is L-lysyl(20)-[histone H4] + 3 S-adenosyl-L-methionine = N(6),N(6),N(6)-trimethyl-L-lysyl(20)-[histone H4] + 3 S-adenosyl-L-homocysteine + 3 H(+). Histone methyltransferase that trimethylates 'Lys-20' of histone H4 to form H4K20me3. The polypeptide is Histone-lysine N-methyltransferase SET9 (SET9) (Chaetomium globosum (strain ATCC 6205 / CBS 148.51 / DSM 1962 / NBRC 6347 / NRRL 1970) (Soil fungus)).